Here is a 91-residue protein sequence, read N- to C-terminus: Transcription factor znf27 (91 aa).

Its subcellular location is the nucleus. In terms of biological role, transcription factor; part of the gene cluster 27 that mediates the biosynthesis of asparasone A, a sclerotium-specific anthraquinone pigment important for sclerotial survival. Controls the expression of the non-reducing polyketide synthase (NRPKS) pks27. In Aspergillus flavus (strain ATCC 200026 / FGSC A1120 / IAM 13836 / NRRL 3357 / JCM 12722 / SRRC 167), this protein is Transcription factor znf27.